Consider the following 876-residue polypeptide: Alanine--tRNA ligase (876 aa).

Zn(2+)-binding residues include His-566, His-570, Cys-668, and His-672.

The protein belongs to the class-II aminoacyl-tRNA synthetase family. Requires Zn(2+) as cofactor.

It is found in the cytoplasm. The catalysed reaction is tRNA(Ala) + L-alanine + ATP = L-alanyl-tRNA(Ala) + AMP + diphosphate. Catalyzes the attachment of alanine to tRNA(Ala) in a two-step reaction: alanine is first activated by ATP to form Ala-AMP and then transferred to the acceptor end of tRNA(Ala). Also edits incorrectly charged Ser-tRNA(Ala) and Gly-tRNA(Ala) via its editing domain. The chain is Alanine--tRNA ligase from Petrotoga mobilis (strain DSM 10674 / SJ95).